The sequence spans 189 residues: Ribosome maturation factor RimM (189 aa).

Over residues 1–16 the composition is skewed to polar residues; sequence MAPSCPTRSRVWSSRT. Residues 1–21 are disordered; that stretch reads MAPSCPTRSRVWSSRTSPPPD. The region spanning 118–189 is the PRC barrel domain; that stretch reads ENEFYWSDLI…TVEVDWGEDY (72 aa).

Belongs to the RimM family. Binds ribosomal protein uS19.

Its subcellular location is the cytoplasm. Functionally, an accessory protein needed during the final step in the assembly of 30S ribosomal subunit, possibly for assembly of the head region. Essential for efficient processing of 16S rRNA. May be needed both before and after RbfA during the maturation of 16S rRNA. It has affinity for free ribosomal 30S subunits but not for 70S ribosomes. This Thiobacillus denitrificans (strain ATCC 25259 / T1) protein is Ribosome maturation factor RimM.